The chain runs to 695 residues: Translation initiation factor IF-2 (695 aa).

A disordered region spans residues 60–92 (KKSASSKKKTEKEVEEEEIETPKKKKKQEEKIP). The tr-type G domain maps to 184 to 358 (QRPPVVTVMG…EMSEIKCIPT (175 aa)). Residues 193-200 (GHVDHGKT) are G1. A GTP-binding site is contributed by 193 to 200 (GHVDHGKT). The G2 stretch occupies residues 218-222 (GITQS). Positions 239–242 (DTPG) are G3. Residues 239–243 (DTPGH) and 293–296 (NKID) each bind GTP. Residues 293–296 (NKID) form a G4 region. The interval 330-332 (SAK) is G5.

It belongs to the TRAFAC class translation factor GTPase superfamily. Classic translation factor GTPase family. IF-2 subfamily.

It localises to the cytoplasm. Its function is as follows. One of the essential components for the initiation of protein synthesis. Protects formylmethionyl-tRNA from spontaneous hydrolysis and promotes its binding to the 30S ribosomal subunits. Also involved in the hydrolysis of GTP during the formation of the 70S ribosomal complex. This Kosmotoga olearia (strain ATCC BAA-1733 / DSM 21960 / TBF 19.5.1) protein is Translation initiation factor IF-2.